The following is a 487-amino-acid chain: L-asparagine permease 2 (487 aa).

Helical transmembrane passes span Gln26–Gly46, Ser50–Leu70, Val98–Thr118, Pro133–Ile153, Phe163–Phe183, Ile214–Ala234, Ile256–Tyr276, Ile290–Ser310, Thr341–Leu361, Ala369–Val389, Ser414–Phe434, and Pro440–Val460.

Belongs to the amino acid-polyamine-organocation (APC) superfamily. Amino acid transporter (AAT) (TC 2.A.3.1) family.

It is found in the cell membrane. Dual function in both nitrogen assimilation and in protection against acid stress during infection. Involved in asparagine uptake. This is L-asparagine permease 2 (ansP2) from Mycobacterium bovis (strain ATCC BAA-935 / AF2122/97).